A 1284-amino-acid chain; its full sequence is Peroxisomal ATPase PEX1 (1284 aa).

Residues 339-373 are disordered; that stretch reads SPKQQQDKSKQGVLLPDKEKQLSKSPDHKQISSNR. Basic and acidic residues predominate over residues 343-373; it reads QQDKSKQGVLLPDKEKQLSKSPDHKQISSNR. Residues 600–607 and 882–889 each bind ATP; these read GGKGSGKS and GPPGTGKT. S1182, S1210, and S1212 each carry phosphoserine. Residues 1261–1284 are disordered; it reads FQNPKKRKNQSGTVFRTGQKVTLA. The segment covering 1270-1284 has biased composition (polar residues); sequence QSGTVFRTGQKVTLA.

Belongs to the AAA ATPase family. In terms of assembly, homooligomer; homooligomerizes in the cytosol, interaction with PEX6 promotes dissociation of the homooligomer. Interacts with PEX6; forming the PEX1-PEX6 AAA ATPase complex, which is composed of a heterohexamer formed by a trimer of PEX1-PEX6 dimers. Interacts indirectly with PEX26, via its interaction with PEX6.

It is found in the cytoplasm. The protein resides in the cytosol. Its subcellular location is the peroxisome membrane. The catalysed reaction is ATP + H2O = ADP + phosphate + H(+). Functionally, component of the PEX1-PEX6 AAA ATPase complex, a protein dislocase complex that mediates the ATP-dependent extraction of the PEX5 receptor from peroxisomal membranes, an essential step for PEX5 recycling. Specifically recognizes PEX5 monoubiquitinated at 'Cys-11', and pulls it out of the peroxisome lumen through the PEX2-PEX10-PEX12 retrotranslocation channel. Extraction by the PEX1-PEX6 AAA ATPase complex is accompanied by unfolding of the TPR repeats and release of bound cargo from PEX5. The protein is Peroxisomal ATPase PEX1 of Mus musculus (Mouse).